The sequence spans 166 residues: Coiled-coil domain-containing protein 12 (166 aa).

Met1 bears the N-acetylmethionine mark. The interval 1–56 is disordered; it reads MEATTAGVGRLEEEALRRKERLKALREKTGRKDKEDGEPKTKHLREEEEEGEKHRE. A coiled-coil region spans residues 8–28; sequence VGRLEEEALRRKERLKALREK. Over residues 10–56 the composition is skewed to basic and acidic residues; it reads RLEEEALRRKERLKALREKTGRKDKEDGEPKTKHLREEEEEGEKHRE. Lys53 is subject to N6-acetyllysine. Lys94 participates in a covalent cross-link: Glycyl lysine isopeptide (Lys-Gly) (interchain with G-Cter in SUMO2). Residues 117-144 adopt a coiled-coil conformation; the sequence is KRDVAKKLEKLKKRTQRAIAELIRERLK. The tract at residues 147-166 is disordered; it reads EDSLASAVDAATEQKTCDSD. Residues Ser149 and Ser165 each carry the phosphoserine modification.

This Homo sapiens (Human) protein is Coiled-coil domain-containing protein 12 (CCDC12).